The following is a 152-amino-acid chain: Phospholipase A2 (152 aa).

A signal peptide spans 1–20; that stretch reads MAACHRILLLLSVAVASGAA. Disulfide bonds link Cys-39–Cys-96, Cys-53–Cys-142, Cys-55–Cys-70, Cys-69–Cys-124, Cys-75–Cys-149, Cys-76–Cys-117, Cys-85–Cys-110, and Cys-103–Cys-115. Ca(2+) is bound by residues Gly-56 and Gly-58. His-73 is a catalytic residue. Asp-74 provides a ligand contact to Ca(2+). The active site involves Asp-118.

Belongs to the phospholipase A2 family. As to expression, expressed by the venom gland. Heavily expressed in the venom gland transcriptome.

It localises to the secreted. It carries out the reaction a 1,2-diacyl-sn-glycero-3-phosphocholine + H2O = a 1-acyl-sn-glycero-3-phosphocholine + a fatty acid + H(+). Functionally, PA2 catalyzes the calcium-dependent hydrolysis of the 2-acyl groups in 3-sn-phosphoglycerides. This chain is Phospholipase A2, found in Meiacanthus atrodorsalis (Forktail blenny).